Here is a 526-residue protein sequence, read N- to C-terminus: ATP synthase subunit alpha (526 aa).

An ATP-binding site is contributed by 171–178 (GDRQVGKT).

Belongs to the ATPase alpha/beta chains family. F-type ATPases have 2 components, CF(1) - the catalytic core - and CF(0) - the membrane proton channel. CF(1) has five subunits: alpha(3), beta(3), gamma(1), delta(1), epsilon(1). CF(0) has three main subunits: a(1), b(2) and c(9-12). The alpha and beta chains form an alternating ring which encloses part of the gamma chain. CF(1) is attached to CF(0) by a central stalk formed by the gamma and epsilon chains, while a peripheral stalk is formed by the delta and b chains.

The protein resides in the cell inner membrane. The enzyme catalyses ATP + H2O + 4 H(+)(in) = ADP + phosphate + 5 H(+)(out). Its function is as follows. Produces ATP from ADP in the presence of a proton gradient across the membrane. The alpha chain is a regulatory subunit. The sequence is that of ATP synthase subunit alpha from Azobacteroides pseudotrichonymphae genomovar. CFP2.